Here is a 177-residue protein sequence, read N- to C-terminus: MSRIGKKPVPVPAGVTGSVEGQTVKAKGAKGELSFVVHDEVLVKMEDGAVRVDPRDQSKEARSKWGMSRTMISNIFVGVKDGFEKKLEISGVGYRAAMQGKNLQLSLGFSHEVVYDVPAGITVAVPKPTEIVVTGIDKQQVGQVAAEIREYRGPEPYKGKGVKYAGEKIVRKEGKKK.

The protein belongs to the universal ribosomal protein uL6 family. As to quaternary structure, part of the 50S ribosomal subunit.

Functionally, this protein binds to the 23S rRNA, and is important in its secondary structure. It is located near the subunit interface in the base of the L7/L12 stalk, and near the tRNA binding site of the peptidyltransferase center. In Brucella abortus (strain S19), this protein is Large ribosomal subunit protein uL6.